The following is a 404-amino-acid chain: Putative gustatory receptor 94a (404 aa).

Over 1-11 the chain is Cytoplasmic; sequence MDFTSDYAHRR. The helical transmembrane segment at 12-32 threads the bilayer; the sequence is MVKFLTIILIGFMTVFGLLAN. Topologically, residues 33 to 43 are extracellular; the sequence is RYRAGRRERFR. The helical transmembrane segment at 44 to 64 threads the bilayer; sequence FSKANLAFASLWAIAFSLVYG. Topologically, residues 65–133 are cytoplasmic; sequence RQIYKEYQEG…RLDSRSLYIS (69 aa). Residues 134-154 traverse the membrane as a helical segment; it reads IVLALVKTVAFPLTIEVAFIL. The Extracellular portion of the chain corresponds to 155–171; it reads QQRRQHPEMSLIWTLYR. Residues 172–192 traverse the membrane as a helical segment; sequence LFPLIISNFLNNCYFGAMVVV. At 193-260 the chain is on the cytoplasmic side; the sequence is KEILYALNRR…HSGKYLTPMS (68 aa). Residues 261–281 traverse the membrane as a helical segment; sequence LSMILSLICHLLGITVGFYSL. Residues 282–296 are Extracellular-facing; sequence YYAIADTLIMGKPYD. A helical membrane pass occupies residues 297 to 317; the sequence is GLGSLINLVFLSISLAEITLL. The Cytoplasmic portion of the chain corresponds to 318 to 376; sequence THLCNHLLVATRRSAVILQEMNLQHADSRYRQAVHGFTLLVTVTKYQIKPLGLYELDMR. The chain crosses the membrane as a helical span at residues 377–397; that stretch reads LISNVFSAVASFLLILVQADL. Topologically, residues 398-404 are extracellular; sequence SQRFKMQ.

Belongs to the insect chemoreceptor superfamily. Gustatory receptor (GR) family. Gr22e subfamily. As to expression, in larvae, is expressed in neurons of the terminal external chemosensory organ.

It localises to the cell membrane. Probable gustatory receptor which mediates acceptance or avoidance behavior, depending on its substrates. In Drosophila melanogaster (Fruit fly), this protein is Putative gustatory receptor 94a (Gr94a).